A 427-amino-acid chain; its full sequence is Diaminobutyrate--2-oxoglutarate transaminase (427 aa).

Residue K269 is modified to N6-(pyridoxal phosphate)lysine.

This sequence belongs to the class-III pyridoxal-phosphate-dependent aminotransferase family. Requires pyridoxal 5'-phosphate as cofactor.

The enzyme catalyses L-2,4-diaminobutanoate + 2-oxoglutarate = L-aspartate 4-semialdehyde + L-glutamate. The protein operates within amine and polyamine biosynthesis; ectoine biosynthesis; L-ectoine from L-aspartate 4-semialdehyde: step 1/3. Its function is as follows. Catalyzes reversively the conversion of L-aspartate beta-semialdehyde (ASA) to L-2,4-diaminobutyrate (DABA) by transamination with L-glutamate. This chain is Diaminobutyrate--2-oxoglutarate transaminase (ectB), found in Halalkalibacterium halodurans (strain ATCC BAA-125 / DSM 18197 / FERM 7344 / JCM 9153 / C-125) (Bacillus halodurans).